A 399-amino-acid polypeptide reads, in one-letter code: Putative 3'-5' exonuclease R431 (399 aa).

The 3'-5' exonuclease domain occupies 118-297 (FQIVDNWIEN…IYNELQLMTN (180 aa)). Residues 335–399 (ERRLKSIESK…NKYVIITRHC (65 aa)) form the R3H domain.

This Acanthamoeba polyphaga (Amoeba) protein is Putative 3'-5' exonuclease R431.